Reading from the N-terminus, the 201-residue chain is Proteasome subunit beta 1 (201 aa).

Met1 is a propeptide (removed in mature form; by autocatalysis). Catalysis depends on Thr2, which acts as the Nucleophile.

This sequence belongs to the peptidase T1B family. The 20S proteasome core is composed of 14 alpha and 14 beta subunits that assemble into four stacked heptameric rings, resulting in a barrel-shaped structure. The two inner rings, each composed of seven catalytic beta subunits, are sandwiched by two outer rings, each composed of seven alpha subunits. The catalytic chamber with the active sites is on the inside of the barrel. Has a gated structure, the ends of the cylinder being occluded by the N-termini of the alpha-subunits. Is capped at one or both ends by the proteasome regulatory ATPase, PAN.

It is found in the cytoplasm. The enzyme catalyses Cleavage of peptide bonds with very broad specificity.. Its activity is regulated as follows. The formation of the proteasomal ATPase PAN-20S proteasome complex, via the docking of the C-termini of PAN into the intersubunit pockets in the alpha-rings, triggers opening of the gate for substrate entry. Interconversion between the open-gate and close-gate conformations leads to a dynamic regulation of the 20S proteasome proteolysis activity. Its function is as follows. Component of the proteasome core, a large protease complex with broad specificity involved in protein degradation. The sequence is that of Proteasome subunit beta 1 from Pyrobaculum neutrophilum (strain DSM 2338 / JCM 9278 / NBRC 100436 / V24Sta) (Thermoproteus neutrophilus).